Consider the following 446-residue polypeptide: Probable glycine dehydrogenase (decarboxylating) subunit 1 (446 aa).

Belongs to the GcvP family. N-terminal subunit subfamily. In terms of assembly, the glycine cleavage system is composed of four proteins: P, T, L and H. In this organism, the P 'protein' is a heterodimer of two subunits.

It catalyses the reaction N(6)-[(R)-lipoyl]-L-lysyl-[glycine-cleavage complex H protein] + glycine + H(+) = N(6)-[(R)-S(8)-aminomethyldihydrolipoyl]-L-lysyl-[glycine-cleavage complex H protein] + CO2. The glycine cleavage system catalyzes the degradation of glycine. The P protein binds the alpha-amino group of glycine through its pyridoxal phosphate cofactor; CO(2) is released and the remaining methylamine moiety is then transferred to the lipoamide cofactor of the H protein. The polypeptide is Probable glycine dehydrogenase (decarboxylating) subunit 1 (Protochlamydia amoebophila (strain UWE25)).